We begin with the raw amino-acid sequence, 190 residues long: dCTP deaminase (190 aa).

DCTP-binding positions include 111–116, 135–137, Gln156, Tyr172, and Gln182; these read KSTYAR and TLE. Glu137 acts as the Proton donor/acceptor in catalysis.

This sequence belongs to the dCTP deaminase family. Homotrimer.

It catalyses the reaction dCTP + H2O + H(+) = dUTP + NH4(+). It participates in pyrimidine metabolism; dUMP biosynthesis; dUMP from dCTP (dUTP route): step 1/2. Catalyzes the deamination of dCTP to dUTP. In Stenotrophomonas maltophilia (strain R551-3), this protein is dCTP deaminase.